The sequence spans 408 residues: Tripartite motif-containing protein 59 (408 aa).

The segment at 10-60 (CSICYSLFEDPRVLPCSHTFCRSCLEGVIQLSSNFSIWRPLRVPLKCPNCR) adopts an RING-type zinc-finger fold. A B box-type zinc finger spans residues 92 to 134 (SDVATCSEHYRQPLNVYCLLDKKLVCGHCLTIGKHNGHPIDDL). 4 residues coordinate Zn(2+): cysteine 97, histidine 100, cysteine 120, and histidine 126. The stretch at 163–247 (LIEKLKEQKA…LNTSIQKEES (85 aa)) forms a coiled coil. Residues 333–353 (ANPLSVTFIFTVIIAIAVLSF) traverse the membrane as a helical segment.

Belongs to the TRIM/RBCC family. Interacts with ECSIT.

The protein localises to the endoplasmic reticulum membrane. Functionally, may serve as a multifunctional regulator for innate immune signaling pathways. This chain is Tripartite motif-containing protein 59 (TRIM59), found in Gallus gallus (Chicken).